Consider the following 180-residue polypeptide: Large ribosomal subunit protein uL6 (180 aa).

The protein belongs to the universal ribosomal protein uL6 family. In terms of assembly, part of the 50S ribosomal subunit.

This protein binds to the 23S rRNA, and is important in its secondary structure. It is located near the subunit interface in the base of the L7/L12 stalk, and near the tRNA binding site of the peptidyltransferase center. The protein is Large ribosomal subunit protein uL6 of Flavobacterium johnsoniae (strain ATCC 17061 / DSM 2064 / JCM 8514 / BCRC 14874 / CCUG 350202 / NBRC 14942 / NCIMB 11054 / UW101) (Cytophaga johnsonae).